A 364-amino-acid polypeptide reads, in one-letter code: Peptide chain release factor 1 (364 aa).

The residue at position 232 (Gln-232) is an N5-methylglutamine.

Belongs to the prokaryotic/mitochondrial release factor family. In terms of processing, methylated by PrmC. Methylation increases the termination efficiency of RF1.

It localises to the cytoplasm. In terms of biological role, peptide chain release factor 1 directs the termination of translation in response to the peptide chain termination codons UAG and UAA. The protein is Peptide chain release factor 1 of Sorangium cellulosum (strain So ce56) (Polyangium cellulosum (strain So ce56)).